Reading from the N-terminus, the 886-residue chain is Kinesin-like protein KIF18A (886 aa).

The region spanning 11–355 is the Kinesin motor domain; sequence RMKVVVRVRP…LKYANRAKEI (345 aa). Residue Lys-24 forms a Glycyl lysine isopeptide (Lys-Gly) (interchain with G-Cter in SUMO2) linkage. 113-120 serves as a coordination point for ATP; that stretch reads GATGSGKT. The stretch at 370–404 forms a coiled coil; it reads ISQYVKICNMQKAEILMLKEKLKAYEEQKALSDRN. Ser-674 is modified (phosphoserine). Lys-683 participates in a covalent cross-link: Glycyl lysine isopeptide (Lys-Gly) (interchain with G-Cter in SUMO2). Ser-695 is modified (phosphoserine). The segment at 774–804 is disordered; sequence EQEPLASSKSSVHRIESSSFSTKDSMPESAG. Lys-782 is covalently cross-linked (Glycyl lysine isopeptide (Lys-Gly) (interchain with G-Cter in SUMO2)). Ser-826 is modified (phosphoserine). Residue Lys-862 forms a Glycyl lysine isopeptide (Lys-Gly) (interchain with G-Cter in SUMO2) linkage. A disordered region spans residues 862–886; the sequence is KRNTNKTNSNMLRKFRRNTSKENVQ.

The protein belongs to the TRAFAC class myosin-kinesin ATPase superfamily. Kinesin family. Interacts with CENPE and ESR1. Glycosylated. In terms of processing, ubiquitinated.

It localises to the cell projection. Its subcellular location is the ruffle. The protein resides in the cytoplasm. It is found in the nucleus. The protein localises to the cytoskeleton. It localises to the microtubule organizing center. Its subcellular location is the centrosome. In terms of biological role, microtubule-depolymerizing kinesin which plays a role in chromosome congression by reducing the amplitude of preanaphase oscillations and slowing poleward movement during anaphase, thus suppressing chromosome movements. May stabilize the CENPE-BUB1B complex at the kinetochores during early mitosis and maintains CENPE levels at kinetochores during chromosome congression. This chain is Kinesin-like protein KIF18A (Kif18a), found in Mus musculus (Mouse).